A 413-amino-acid polypeptide reads, in one-letter code: RNA-binding protein 41 (413 aa).

The span at 223–235 (SVGDSGTAESPSL) shows a compositional bias: polar residues. The interval 223–247 (SVGDSGTAESPSLLQDKGKQAAQGK) is disordered. Residue Ser232 is modified to Phosphoserine. One can recognise an RRM domain in the interval 309-387 (KVLYLKNLSP…KILVIEFGKN (79 aa)).

Functionally, may bind RNA. This Homo sapiens (Human) protein is RNA-binding protein 41 (RBM41).